We begin with the raw amino-acid sequence, 99 residues long: VEVLMGGSGGELAFIPNELQVNAGEQIVFKNNAGFPHNVIFDEDAVPAGVDVSSISMSEEDLLNAPGETYVVKLDKKGTYRFFCAPHQGIGMSGIVTVN.

Residues 1–99 (VEVLMGGSGG…IGMSGIVTVN (99 aa)) enclose the Plastocyanin-like domain. The Cu cation site is built by H37, C84, H87, and M92.

The protein belongs to the plastocyanin family. Cu(2+) serves as cofactor.

The protein localises to the plastid. It is found in the chloroplast thylakoid membrane. Its function is as follows. Participates in electron transfer between P700 and the cytochrome b6-f complex in photosystem I. The protein is Plastocyanin (PETE) of Ginkgo biloba (Ginkgo).